The primary structure comprises 409 residues: Protein PHOSPHATE STARVATION RESPONSE 1 (409 aa).

Positions 1–15 are enriched in basic and acidic residues; the sequence is MEARPVHRSGSRDLT. 3 disordered regions span residues 1–42, 86–108, and 178–226; these read MEAR…NSQL, EKQQ…NNDS, and ETNS…TGKA. 2 stretches are compositionally biased toward polar residues: residues 16–26 and 90–108; these read RTSSIPSTQKP and HYTG…NNDS. The span at 192–224 shows a compositional bias: low complexity; sequence QIPQPQIVQQQPSPSVELRPVSTTSSNSNNGTG. Residues 222-282 form the HTH myb-type domain; the sequence is GTGKARMRWT…HLQKYRTARY (61 aa). Residues 253–278 constitute a DNA-binding region (H-T-H motif); the sequence is PKGVLKIMKVEGLTIYHVKSHLQKYR. Residues 314-334 adopt a coiled-coil conformation; the sequence is TEALRLQMEVQKQLHEQLEIQ. The LHEQLE signature appears at 327 to 332; sequence LHEQLE. Residues 358–370 are compositionally biased toward polar residues; it reads GLTKGTASTSDSA. Residues 358 to 409 form a disordered region; the sequence is GLTKGTASTSDSAAKSEQEDKKTADSKEVPEEETRKCEELESPQPKRPKIDN. The segment covering 371–396 has biased composition (basic and acidic residues); that stretch reads AKSEQEDKKTADSKEVPEEETRKCEE. Position 399 is a phosphoserine (S399).

This sequence belongs to the MYB-CC family. In terms of assembly, homodimers and heterodimers. Interacts with SPX1 in a Pi-dependent manner. Does not interact with PHL2 or PHL3. Sumoylated by SIZ1. Sumoylation controls phosphate deficiency responses.

It localises to the nucleus. Transcription factor involved in phosphate starvation signaling. Binds as a dimer to P1BS, an imperfect palindromic sequence 5'-GNATATNC-3', to promote the expression of inorganic phosphate (Pi) starvation-responsive genes. SPX1 is a competitive inhibitor of this DNA-binding. PHR1 binding to its targets is low Pi-dependent. Regulates the expression of miR399. Regulates the expression of IPS1 (At3g09922), a non-coding RNA that mimics the target of miR399 to block the cleavage of PHO2 under Pi-deficient conditions. Regulates lipid remodeling and triacylglycerol accumulation during phosphorus starvation. Required for the shoot-specific hypoxic response. Regulates FER1 expression upon phosphate starvation, linking iron and phosphate homeostasis. Contributes to the homeostasis of both sulfate and phosphate in plants under phosphate deficiency. Required for adaptation to high light and retaining functional photosynthesis during phosphate starvation. Involved in the coregulation of Zn and Pi homeostasis. The polypeptide is Protein PHOSPHATE STARVATION RESPONSE 1 (Arabidopsis thaliana (Mouse-ear cress)).